The following is a 267-amino-acid chain: NAD kinase (267 aa).

D45 (proton acceptor) is an active-site residue. NAD(+) is bound by residues 45–46 (DG), 121–122 (NE), K147, D149, 160–165 (TAYSKS), and A184.

This sequence belongs to the NAD kinase family. The cofactor is a divalent metal cation.

The protein resides in the cytoplasm. The catalysed reaction is NAD(+) + ATP = ADP + NADP(+) + H(+). In terms of biological role, involved in the regulation of the intracellular balance of NAD and NADP, and is a key enzyme in the biosynthesis of NADP. Catalyzes specifically the phosphorylation on 2'-hydroxyl of the adenosine moiety of NAD to yield NADP. This Lactobacillus gasseri (strain ATCC 33323 / DSM 20243 / BCRC 14619 / CIP 102991 / JCM 1131 / KCTC 3163 / NCIMB 11718 / NCTC 13722 / AM63) protein is NAD kinase.